Reading from the N-terminus, the 366-residue chain is UDP-N-acetylenolpyruvoylglucosamine reductase (366 aa).

Residues 27 to 197 form the FAD-binding PCMH-type domain; it reads LGGPAAGFVV…LRVRFLLRDG (171 aa). Arg-175 is a catalytic residue. Catalysis depends on Ser-252, which acts as the Proton donor. The active site involves Glu-358.

It belongs to the MurB family. FAD serves as cofactor.

Its subcellular location is the cytoplasm. It carries out the reaction UDP-N-acetyl-alpha-D-muramate + NADP(+) = UDP-N-acetyl-3-O-(1-carboxyvinyl)-alpha-D-glucosamine + NADPH + H(+). It participates in cell wall biogenesis; peptidoglycan biosynthesis. Its function is as follows. Cell wall formation. The chain is UDP-N-acetylenolpyruvoylglucosamine reductase from Saccharopolyspora erythraea (strain ATCC 11635 / DSM 40517 / JCM 4748 / NBRC 13426 / NCIMB 8594 / NRRL 2338).